The following is a 429-amino-acid chain: Enolase (429 aa).

Gln168 contacts (2R)-2-phosphoglycerate. The active-site Proton donor is Glu210. Residues Asp247, Glu288, and Asp315 each contribute to the Mg(2+) site. (2R)-2-phosphoglycerate contacts are provided by Lys340, Arg369, Ser370, and Lys391. The active-site Proton acceptor is the Lys340.

It belongs to the enolase family. It depends on Mg(2+) as a cofactor.

It localises to the cytoplasm. The protein localises to the secreted. The protein resides in the cell surface. It catalyses the reaction (2R)-2-phosphoglycerate = phosphoenolpyruvate + H2O. It functions in the pathway carbohydrate degradation; glycolysis; pyruvate from D-glyceraldehyde 3-phosphate: step 4/5. Its function is as follows. Catalyzes the reversible conversion of 2-phosphoglycerate (2-PG) into phosphoenolpyruvate (PEP). It is essential for the degradation of carbohydrates via glycolysis. The polypeptide is Enolase (Trichormus variabilis (strain ATCC 29413 / PCC 7937) (Anabaena variabilis)).